A 132-amino-acid polypeptide reads, in one-letter code: Phosphoribosyl-AMP cyclohydrolase (132 aa).

D78 is a binding site for Mg(2+). Residue C79 participates in Zn(2+) binding. Mg(2+)-binding residues include D80 and D82. Positions 96 and 103 each coordinate Zn(2+).

Belongs to the PRA-CH family. As to quaternary structure, homodimer. Requires Mg(2+) as cofactor. It depends on Zn(2+) as a cofactor.

Its subcellular location is the cytoplasm. The catalysed reaction is 1-(5-phospho-beta-D-ribosyl)-5'-AMP + H2O = 1-(5-phospho-beta-D-ribosyl)-5-[(5-phospho-beta-D-ribosylamino)methylideneamino]imidazole-4-carboxamide. It participates in amino-acid biosynthesis; L-histidine biosynthesis; L-histidine from 5-phospho-alpha-D-ribose 1-diphosphate: step 3/9. Catalyzes the hydrolysis of the adenine ring of phosphoribosyl-AMP. This is Phosphoribosyl-AMP cyclohydrolase from Nitrosococcus oceani (strain ATCC 19707 / BCRC 17464 / JCM 30415 / NCIMB 11848 / C-107).